Reading from the N-terminus, the 130-residue chain is Small ribosomal subunit protein uS9 (130 aa).

It belongs to the universal ribosomal protein uS9 family.

The chain is Small ribosomal subunit protein uS9 from Photorhabdus laumondii subsp. laumondii (strain DSM 15139 / CIP 105565 / TT01) (Photorhabdus luminescens subsp. laumondii).